The sequence spans 263 residues: Proteasome subunit alpha type-1 (263 aa).

M1 carries the N-acetylmethionine modification. S110 carries the phosphoserine; alternate modification. S110 is a glycosylation site (O-linked (GlcNAc) serine; alternate). K115 participates in a covalent cross-link: Glycyl lysine isopeptide (Lys-Gly) (interchain with G-Cter in ubiquitin). S177 bears the Phosphoserine mark. K208 participates in a covalent cross-link: Glycyl lysine isopeptide (Lys-Gly) (interchain with G-Cter in ubiquitin). The segment at 232 to 263 (FLEGLEERPQRKAQPTQPADEPAEKADEPMEH) is disordered. Residues 253–263 (PAEKADEPMEH) are compositionally biased toward basic and acidic residues.

It belongs to the peptidase T1A family. As to quaternary structure, the 26S proteasome consists of a 20S proteasome core and two 19S regulatory subunits. The 20S proteasome core is a barrel-shaped complex made of 28 subunits that are arranged in four stacked rings. The two outer rings are each formed by seven alpha subunits, and the two inner rings are formed by seven beta subunits. The proteolytic activity is exerted by three beta-subunits PSMB5, PSMB6 and PSMB7. Interacts with NOTCH3. Interacts with ZFAND1.

It localises to the cytoplasm. Its subcellular location is the nucleus. Component of the 20S core proteasome complex involved in the proteolytic degradation of most intracellular proteins. This complex plays numerous essential roles within the cell by associating with different regulatory particles. Associated with two 19S regulatory particles, forms the 26S proteasome and thus participates in the ATP-dependent degradation of ubiquitinated proteins. The 26S proteasome plays a key role in the maintenance of protein homeostasis by removing misfolded or damaged proteins that could impair cellular functions, and by removing proteins whose functions are no longer required. Associated with the PA200 or PA28, the 20S proteasome mediates ubiquitin-independent protein degradation. This type of proteolysis is required in several pathways including spermatogenesis (20S-PA200 complex) or generation of a subset of MHC class I-presented antigenic peptides (20S-PA28 complex). This is Proteasome subunit alpha type-1 (PSMA1) from Bos taurus (Bovine).